The sequence spans 410 residues: NADH-quinone oxidoreductase subunit H (410 aa).

9 helical membrane passes run 16–36, 84–104, 124–144, 165–185, 198–218, 260–280, 288–308, 320–340, and 353–373; these read LILA…LAAI, WIYL…FAVI, LPVA…GIVL, VISY…YAGT, VWFI…MVGE, VSAL…PISI, WWPL…FMWL, FMRL…AIVA, and WVTA…LLAW. The segment at 384 to 410 is disordered; the sequence is SHSPPAQSSDHGAFPVPPLPVKEPADA.

The protein belongs to the complex I subunit 1 family. In terms of assembly, NDH-1 is composed of 14 different subunits. Subunits NuoA, H, J, K, L, M, N constitute the membrane sector of the complex.

It is found in the cell membrane. It carries out the reaction a quinone + NADH + 5 H(+)(in) = a quinol + NAD(+) + 4 H(+)(out). In terms of biological role, NDH-1 shuttles electrons from NADH, via FMN and iron-sulfur (Fe-S) centers, to quinones in the respiratory chain. The immediate electron acceptor for the enzyme in this species is believed to be menaquinone. Couples the redox reaction to proton translocation (for every two electrons transferred, four hydrogen ions are translocated across the cytoplasmic membrane), and thus conserves the redox energy in a proton gradient. This chain is NADH-quinone oxidoreductase subunit H, found in Mycolicibacterium gilvum (strain PYR-GCK) (Mycobacterium gilvum (strain PYR-GCK)).